An 875-amino-acid polypeptide reads, in one-letter code: Alanine--tRNA ligase (875 aa).

Zn(2+) is bound by residues histidine 564, histidine 568, cysteine 666, and histidine 670.

This sequence belongs to the class-II aminoacyl-tRNA synthetase family. In terms of assembly, homotetramer. The cofactor is Zn(2+).

It is found in the cytoplasm. The catalysed reaction is tRNA(Ala) + L-alanine + ATP = L-alanyl-tRNA(Ala) + AMP + diphosphate. In terms of biological role, catalyzes the attachment of alanine to tRNA(Ala) in a two-step reaction: alanine is first activated by ATP to form Ala-AMP and then transferred to the acceptor end of tRNA(Ala). Also edits incorrectly charged Ser-tRNA(Ala) and Gly-tRNA(Ala) via its editing domain. The polypeptide is Alanine--tRNA ligase (Pectobacterium atrosepticum (strain SCRI 1043 / ATCC BAA-672) (Erwinia carotovora subsp. atroseptica)).